The following is a 274-amino-acid chain: Trehalose transport system permease protein SugB (274 aa).

A run of 6 helical transmembrane segments spans residues 8-28, 70-90, 102-122, 137-157, 182-202, and 239-259; these read YWAV…LWIF, IGIG…AAYA, LIGA…TPLF, LILP…SAFF, VIVP…FIFA, and GSIA…VLIF. An ABC transmembrane type-1 domain is found at 66–259; the sequence is LINSIGIGLI…IPIIVFVLIF (194 aa).

This sequence belongs to the binding-protein-dependent transport system permease family. In terms of assembly, the complex is composed of two ATP-binding proteins (SugC), two transmembrane proteins (Suga and SugB) and a solute-binding protein (LpqY).

Its subcellular location is the cell inner membrane. In terms of biological role, part of the ABC transporter complex LpqY-SugA-SugB-SugC, which is highly specific for uptake of trehalose. Involved in the recycling of extracellular trehalose released from trehalose-containing molecules synthesized by M.tuberculosis. Trehalose uptake is essential for virulence. Probably responsible for the translocation of the substrate across the membrane. This is Trehalose transport system permease protein SugB (sugB) from Mycobacterium tuberculosis (strain CDC 1551 / Oshkosh).